The following is a 466-amino-acid chain: Cysteine--tRNA ligase (466 aa).

Cys-28 contacts Zn(2+). The 'HIGH' region motif lies at 30 to 40 (PTVYNYIHIGN). Residues Cys-208, His-233, and Glu-237 each coordinate Zn(2+). The 'KMSKS' region motif lies at 265 to 269 (KMSKS). Lys-268 provides a ligand contact to ATP.

The protein belongs to the class-I aminoacyl-tRNA synthetase family. In terms of assembly, monomer. Requires Zn(2+) as cofactor.

It localises to the cytoplasm. It carries out the reaction tRNA(Cys) + L-cysteine + ATP = L-cysteinyl-tRNA(Cys) + AMP + diphosphate. This Staphylococcus saprophyticus subsp. saprophyticus (strain ATCC 15305 / DSM 20229 / NCIMB 8711 / NCTC 7292 / S-41) protein is Cysteine--tRNA ligase.